The sequence spans 358 residues: E3 ubiquitin-protein ligase RNF146 (358 aa).

The RING-type zinc finger occupies 36–74; it reads CAICLQTCVHPVSLPCKHVFCYLCVKGASWLGKRCALCR. Residues Lys84 and Lys94 each participate in a glycyl lysine isopeptide (Lys-Gly) (interchain with G-Cter in ubiquitin) cross-link. One can recognise a WWE domain in the interval 91–167; it reads EELKAASRGN…EHGRRRKIKR (77 aa). Residues Tyr107, Arg110, and Trp114 each coordinate a glycoprotein. A Glycyl lysine isopeptide (Lys-Gly) (interchain with G-Cter in ubiquitin) cross-link involves residue Lys130. Positions 144, 153, 163, and 175 each coordinate a glycoprotein. Lys175 participates in a covalent cross-link: Glycyl lysine isopeptide (Lys-Gly) (interchain with G-Cter in ubiquitin). The interval 253–358 is disordered; it reads GDNTAERSHR…PDGQCTVTEV (106 aa). A compositionally biased stretch (acidic residues) spans 283–297; sequence SIEETESDASSDSED. Residues Ser289 and Ser293 each carry the phosphoserine modification. The span at 305-322 shows a compositional bias: polar residues; the sequence is HSLTQQRLLVSNANQTVP.

In terms of assembly, can form homooligomers. Interacts with PARsylated AXIN1, AXIN2, BLZF1, CASC3, H1-2, IPO7, LIG3, NCL, PARP1, XRCC1, XRCC5 and XRCC6. Interacts with DDB1, DHX15, IQGAP1, LRPPRC, PARP2, PRKDC, RUVBL2, TNKS1 and TNKS2. Binding often leads to interactor ubiquitination, in the presence of the appropriate E1 and E2 enzymes, and proteasomal degradation. Post-translationally, ubiquitinated; autoubiquitinated. Autoubiquitination is enhanced upon poly(ADP-ribose)-binding.

It is found in the cytoplasm. Its subcellular location is the cytosol. The protein resides in the nucleus. It carries out the reaction S-ubiquitinyl-[E2 ubiquitin-conjugating enzyme]-L-cysteine + [acceptor protein]-L-lysine = [E2 ubiquitin-conjugating enzyme]-L-cysteine + N(6)-ubiquitinyl-[acceptor protein]-L-lysine.. It functions in the pathway protein modification; protein ubiquitination. Functionally, E3 ubiquitin-protein ligase that specifically binds poly-ADP-ribosylated (PARsylated) proteins and mediates their ubiquitination and subsequent degradation. May regulate many important biological processes, such as cell survival and DNA damage response. Acts as an activator of the Wnt signaling pathway by mediating the ubiquitination of PARsylated AXIN1 and AXIN2, 2 key components of the beta-catenin destruction complex. Acts in cooperation with tankyrase proteins (TNKS and TNKS2), which mediate PARsylation of target proteins AXIN1, AXIN2, BLZF1, CASC3, TNKS and TNKS2. Recognizes and binds tankyrase-dependent PARsylated proteins via its WWE domain and mediates their ubiquitination, leading to their degradation. Different ubiquitin linkage types have been observed: TNKS2 undergoes ubiquitination at 'Lys-48' and 'Lys-63', while AXIN1 is only ubiquitinated at 'Lys-48'. May regulate TNKS and TNKS2 subcellular location, preventing aggregation at a centrosomal location. Neuroprotective protein. Protects the brain against N-methyl-D-aspartate (NMDA) receptor-mediated glutamate excitotoxicity and ischemia, by interfering with PAR-induced cell death, called parthanatos. Prevents nuclear translocation of AIFM1 in a PAR-binding dependent manner. Does not affect PARP1 activation. Protects against cell death induced by DNA damaging agents, such as N-methyl-N-nitro-N-nitrosoguanidine (MNNG) and rescues cells from G1 arrest. Promotes cell survival after gamma-irradiation. Facilitates DNA repair. The sequence is that of E3 ubiquitin-protein ligase RNF146 (RNF146) from Pongo abelii (Sumatran orangutan).